A 290-amino-acid polypeptide reads, in one-letter code: 33 kDa chaperonin (290 aa).

Intrachain disulfides connect Cys235–Cys237 and Cys268–Cys271.

Belongs to the HSP33 family. Post-translationally, under oxidizing conditions two disulfide bonds are formed involving the reactive cysteines. Under reducing conditions zinc is bound to the reactive cysteines and the protein is inactive.

Its subcellular location is the cytoplasm. Its function is as follows. Redox regulated molecular chaperone. Protects both thermally unfolding and oxidatively damaged proteins from irreversible aggregation. Plays an important role in the bacterial defense system toward oxidative stress. This chain is 33 kDa chaperonin, found in Streptococcus uberis (strain ATCC BAA-854 / 0140J).